The primary structure comprises 175 residues: Peptide deformylase (175 aa).

Fe cation contacts are provided by Cys99 and His141. Residue Glu142 is part of the active site. A Fe cation-binding site is contributed by His145.

This sequence belongs to the polypeptide deformylase family. Fe(2+) is required as a cofactor.

It carries out the reaction N-terminal N-formyl-L-methionyl-[peptide] + H2O = N-terminal L-methionyl-[peptide] + formate. Removes the formyl group from the N-terminal Met of newly synthesized proteins. Requires at least a dipeptide for an efficient rate of reaction. N-terminal L-methionine is a prerequisite for activity but the enzyme has broad specificity at other positions. This chain is Peptide deformylase, found in Rickettsia prowazekii (strain Madrid E).